Here is a 120-residue protein sequence, read N- to C-terminus: Ribosome-binding factor A (120 aa).

The protein belongs to the RbfA family. As to quaternary structure, monomer. Binds 30S ribosomal subunits, but not 50S ribosomal subunits or 70S ribosomes.

It is found in the cytoplasm. In terms of biological role, one of several proteins that assist in the late maturation steps of the functional core of the 30S ribosomal subunit. Associates with free 30S ribosomal subunits (but not with 30S subunits that are part of 70S ribosomes or polysomes). Required for efficient processing of 16S rRNA. May interact with the 5'-terminal helix region of 16S rRNA. In Chlamydia felis (strain Fe/C-56) (Chlamydophila felis), this protein is Ribosome-binding factor A.